We begin with the raw amino-acid sequence, 507 residues long: 3-oxosteroid 1-dehydrogenase (507 aa).

9-38 provides a ligand contact to FAD; it reads DLLVVGSGGGALTGAYTAAAQGLTTIVLEK. The interval 299–385 is disordered; the sequence is GLVVDSPGSV…LPRPDYRPER (87 aa).

This sequence belongs to the FAD-dependent oxidoreductase 2 family. 3-oxosteroid dehydrogenase subfamily. Requires FAD as cofactor.

It is found in the cell membrane. It catalyses the reaction a 3-oxosteroid + A = a 3-oxo-Delta(1)-steroid + AH2. It functions in the pathway lipid metabolism; steroid degradation. Functionally, catalyzes the elimination of the C-1 and C-2 hydrogen atoms of the A-ring from the polycyclic ring structure of 3-ketosteroids. The protein is 3-oxosteroid 1-dehydrogenase of Rhodococcus opacus (Nocardia opaca).